The sequence spans 431 residues: Adenylosuccinate synthetase (431 aa).

GTP is bound by residues 13–19 (GDEGKGK) and 41–43 (GHT). The active-site Proton acceptor is aspartate 14. 2 residues coordinate Mg(2+): aspartate 14 and glycine 41. IMP-binding positions include 14–17 (DEGK), 39–42 (NAGH), threonine 130, arginine 144, glutamine 225, threonine 240, and arginine 304. Histidine 42 serves as the catalytic Proton donor. 300 to 306 (ATTGRQR) provides a ligand contact to substrate. GTP contacts are provided by residues arginine 306, 332-334 (KLD), and 414-416 (STG).

The protein belongs to the adenylosuccinate synthetase family. Homodimer. Mg(2+) is required as a cofactor.

It localises to the cytoplasm. The catalysed reaction is IMP + L-aspartate + GTP = N(6)-(1,2-dicarboxyethyl)-AMP + GDP + phosphate + 2 H(+). It participates in purine metabolism; AMP biosynthesis via de novo pathway; AMP from IMP: step 1/2. In terms of biological role, plays an important role in the de novo pathway of purine nucleotide biosynthesis. Catalyzes the first committed step in the biosynthesis of AMP from IMP. The polypeptide is Adenylosuccinate synthetase (Saccharophagus degradans (strain 2-40 / ATCC 43961 / DSM 17024)).